Reading from the N-terminus, the 556-residue chain is 2-isopropylmalate synthase (556 aa).

A Pyruvate carboxyltransferase domain is found at 33–307 (PIWCSSDLRD…NPELDFSDID (275 aa)). Residues D42, H246, H248, and N282 each contribute to the Mg(2+) site. Positions 439-556 (ANTPYALISH…SLSQAQAKAA (118 aa)) are regulatory domain.

Belongs to the alpha-IPM synthase/homocitrate synthase family. LeuA type 2 subfamily. In terms of assembly, homodimer. Mg(2+) is required as a cofactor.

The protein resides in the cytoplasm. The enzyme catalyses 3-methyl-2-oxobutanoate + acetyl-CoA + H2O = (2S)-2-isopropylmalate + CoA + H(+). It functions in the pathway amino-acid biosynthesis; L-leucine biosynthesis; L-leucine from 3-methyl-2-oxobutanoate: step 1/4. Catalyzes the condensation of the acetyl group of acetyl-CoA with 3-methyl-2-oxobutanoate (2-ketoisovalerate) to form 3-carboxy-3-hydroxy-4-methylpentanoate (2-isopropylmalate). In Pseudomonas syringae pv. tomato (strain ATCC BAA-871 / DC3000), this protein is 2-isopropylmalate synthase.